Consider the following 444-residue polypeptide: Homocysteine/cysteine synthase (444 aa).

Ser-44 is modified (phosphoserine). Lys-160 participates in a covalent cross-link: Glycyl lysine isopeptide (Lys-Gly) (interchain with G-Cter in ubiquitin). Position 209 is an N6-(pyridoxal phosphate)lysine (Lys-209).

The protein belongs to the trans-sulfuration enzymes family. Homotetramer. Requires pyridoxal 5'-phosphate as cofactor.

Its subcellular location is the cytoplasm. It catalyses the reaction O-acetyl-L-homoserine + methanethiol = L-methionine + acetate + H(+). It carries out the reaction O-acetyl-L-homoserine + hydrogen sulfide = L-homocysteine + acetate. The enzyme catalyses O-acetyl-L-serine + hydrogen sulfide = L-cysteine + acetate. Its pathway is amino-acid biosynthesis; L-methionine biosynthesis via de novo pathway; L-homocysteine from O-acetyl-L-homoserine. Functionally, catalyzes the conversion of O-acetyl-L-homoserine (OAH) into homocysteine in the methionine biosynthesis pathway. Required to efficiently reduce toxic levels of hydrogen sulfide generated when the sulfate assimilation pathway (SAP) is active. Also catalyzes the conversion of O-acetylserine (OAS) into cysteine, the last step in the cysteine biosynthesis pathway. However, it seems that in S.cerevisiae cysteine biosynthesis occurs exclusively through the cystathionine pathway and not via direct incorporation of sulfur into OAS. It therefore has no metabolic role in cysteine biosynthesis and may only have a regulatory role controlling OAS levels. The protein is Homocysteine/cysteine synthase of Saccharomyces cerevisiae (strain ATCC 204508 / S288c) (Baker's yeast).